The chain runs to 406 residues: Cysteine desulfurase (406 aa).

The residue at position 226 (Lys226) is an N6-(pyridoxal phosphate)lysine. Cys364 functions as the Cysteine persulfide intermediate in the catalytic mechanism.

Belongs to the class-V pyridoxal-phosphate-dependent aminotransferase family. Csd subfamily. As to quaternary structure, homodimer. Interacts with SufE and the SufBCD complex composed of SufB, SufC and SufD. The interaction with SufE is required to mediate the direct transfer of the sulfur atom from the S-sulfanylcysteine. Pyridoxal 5'-phosphate is required as a cofactor.

It localises to the cytoplasm. The enzyme catalyses (sulfur carrier)-H + L-cysteine = (sulfur carrier)-SH + L-alanine. It catalyses the reaction L-selenocysteine + AH2 = hydrogenselenide + L-alanine + A + H(+). It functions in the pathway cofactor biosynthesis; iron-sulfur cluster biosynthesis. Its function is as follows. Cysteine desulfurases mobilize the sulfur from L-cysteine to yield L-alanine, an essential step in sulfur metabolism for biosynthesis of a variety of sulfur-containing biomolecules. Component of the suf operon, which is activated and required under specific conditions such as oxidative stress and iron limitation. Acts as a potent selenocysteine lyase in vitro, that mobilizes selenium from L-selenocysteine. Selenocysteine lyase activity is however unsure in vivo. This Escherichia coli O157:H7 (strain EC4115 / EHEC) protein is Cysteine desulfurase.